We begin with the raw amino-acid sequence, 525 residues long: 2-isopropylmalate synthase (525 aa).

The Pyruvate carboxyltransferase domain occupies 12 to 274 (VVIFDTTLRD…WNKIDTTQLT (263 aa)). Positions 21, 209, 211, and 245 each coordinate Mn(2+). The regulatory domain stretch occupies residues 398–525 (KLLSLSVIAG…GHGASAAAAS (128 aa)).

This sequence belongs to the alpha-IPM synthase/homocitrate synthase family. LeuA type 1 subfamily. In terms of assembly, homodimer. Requires Mn(2+) as cofactor.

It localises to the cytoplasm. It carries out the reaction 3-methyl-2-oxobutanoate + acetyl-CoA + H2O = (2S)-2-isopropylmalate + CoA + H(+). Its pathway is amino-acid biosynthesis; L-leucine biosynthesis; L-leucine from 3-methyl-2-oxobutanoate: step 1/4. Catalyzes the condensation of the acetyl group of acetyl-CoA with 3-methyl-2-oxobutanoate (2-ketoisovalerate) to form 3-carboxy-3-hydroxy-4-methylpentanoate (2-isopropylmalate). The protein is 2-isopropylmalate synthase of Bradyrhizobium sp. (strain ORS 278).